A 753-amino-acid chain; its full sequence is Cytoplasmic polyadenylation element-binding protein 3 (753 aa).

The segment at 111 to 286 is disordered; it reads VGESTPSSAG…NGSWHGELPP (176 aa). Basic and acidic residues-rich tracts occupy residues 131-142 and 175-188; these read KPTEKISVDEPP and FGKE…EVVK. Positions 227–239 are enriched in low complexity; sequence SPAKISSNSSSSS. Residues 265–279 are compositionally biased toward polar residues; that stretch reads SRQGLSNRDNLSNGS. One can recognise an RRM domain in the interval 298–320; sequence IFVGGVPWDITEAALKDSFGEFG. Positions 567–589 are disordered; it reads KAYAGPHRRPHLTSNSLSKSHGC. Positions 578-589 are enriched in polar residues; the sequence is LTSNSLSKSHGC.

Its function is as follows. Cytoplasmic polyadenylation element binding protein that binds to and regulates the translation of specific mRNAs. In Caenorhabditis briggsae, this protein is Cytoplasmic polyadenylation element-binding protein 3 (cpb-3).